Reading from the N-terminus, the 279-residue chain is Shikimate dehydrogenase (NADP(+)) (279 aa).

Residues 20–22 and Thr67 each bind shikimate; that span reads SRS. The active-site Proton acceptor is Lys71. Asp83 contributes to the NADP(+) binding site. Residues Asn92 and Asp108 each coordinate shikimate. NADP(+) contacts are provided by residues 134–138 and Leu223; that span reads GAGGA. Tyr225 lines the shikimate pocket. NADP(+) is bound at residue Gly246.

This sequence belongs to the shikimate dehydrogenase family. As to quaternary structure, homodimer.

It carries out the reaction shikimate + NADP(+) = 3-dehydroshikimate + NADPH + H(+). It functions in the pathway metabolic intermediate biosynthesis; chorismate biosynthesis; chorismate from D-erythrose 4-phosphate and phosphoenolpyruvate: step 4/7. Its function is as follows. Involved in the biosynthesis of the chorismate, which leads to the biosynthesis of aromatic amino acids. Catalyzes the reversible NADPH linked reduction of 3-dehydroshikimate (DHSA) to yield shikimate (SA). The polypeptide is Shikimate dehydrogenase (NADP(+)) (Cereibacter sphaeroides (strain ATCC 17029 / ATH 2.4.9) (Rhodobacter sphaeroides)).